A 490-amino-acid chain; its full sequence is Gallate decarboxylase (490 aa).

Asp-165 is a Mn(2+) binding site. Prenylated FMN-binding positions include 168 to 170 (IHR) and Gly-187. Residue Glu-233 coordinates Mn(2+). Glu-289 acts as the Proton acceptor in catalysis.

It belongs to the UbiD family. The cofactor is prenylated FMN. Mn(2+) is required as a cofactor.

The catalysed reaction is 3,4,5-trihydroxybenzoate + H(+) = 1,2,3-trihydroxybenzene + CO2. It carries out the reaction 3,4-dihydroxybenzoate + H(+) = catechol + CO2. Its function is as follows. Involved in tannin degradation. Catalyzes the decarboxylation of gallic acid and protocatechuic acid to pyrogallol and catechol, respectively. This is Gallate decarboxylase from Lactiplantibacillus plantarum (strain ATCC BAA-793 / NCIMB 8826 / WCFS1) (Lactobacillus plantarum).